Here is a 591-residue protein sequence, read N- to C-terminus: Aspartate--tRNA ligase (591 aa).

Glutamate 176 provides a ligand contact to L-aspartate. The tract at residues 200 to 203 is aspartate; sequence QILK. Position 222 (arginine 222) interacts with L-aspartate. Residues 222 to 224 and glutamine 231 contribute to the ATP site; that span reads RDE. Residue histidine 450 coordinates L-aspartate. Glutamate 484 serves as a coordination point for ATP. Position 491 (arginine 491) interacts with L-aspartate. 536–539 is a binding site for ATP; the sequence is GLDR.

This sequence belongs to the class-II aminoacyl-tRNA synthetase family. Type 1 subfamily. Homodimer.

The protein resides in the cytoplasm. The catalysed reaction is tRNA(Asp) + L-aspartate + ATP = L-aspartyl-tRNA(Asp) + AMP + diphosphate. Its function is as follows. Catalyzes the attachment of L-aspartate to tRNA(Asp) in a two-step reaction: L-aspartate is first activated by ATP to form Asp-AMP and then transferred to the acceptor end of tRNA(Asp). This Listeria welshimeri serovar 6b (strain ATCC 35897 / DSM 20650 / CCUG 15529 / CIP 8149 / NCTC 11857 / SLCC 5334 / V8) protein is Aspartate--tRNA ligase.